We begin with the raw amino-acid sequence, 255 residues long: Cytochrome b561 and DOMON domain-containing protein At5g48750 (255 aa).

The signal sequence occupies residues 1 to 27 (MFLSSRTIFVGLCFLFVLAPCFTRATT). The region spanning 54–169 (LDSFLHYSYV…TVVNHLWQDG (116 aa)) is the DOMON domain. Residues 176–255 (RLGMHAMSGN…DPTWFYILIL (80 aa)) form the Cytochrome b561 domain. Residues 216–236 (IHGLVNAVCWGIFIPIGVMAA) form a helical membrane-spanning segment.

The protein localises to the membrane. This is Cytochrome b561 and DOMON domain-containing protein At5g48750 from Arabidopsis thaliana (Mouse-ear cress).